Consider the following 340-residue polypeptide: 4-amino-5-hydroxymethyl-2-methylpyrimidine phosphate synthase THI11 (340 aa).

Position 62 is an N6-(pyridoxal phosphate)lysine (Lys-62). His-66 is an active-site residue. 115–118 contributes to the pyridoxal 5'-phosphate binding site; it reads GEFG. The CCCFC; essential for catalytic activity, may be the site of iron coordination signature appears at 195–199; that stretch reads CCCFC.

This sequence belongs to the NMT1/THI5 family. Homodimer. Fe cation is required as a cofactor.

The catalysed reaction is N(6)-(pyridoxal phosphate)-L-lysyl-[4-amino-5-hydroxymethyl-2-methylpyrimidine phosphate synthase] + L-histidyl-[4-amino-5-hydroxymethyl-2-methylpyrimidine phosphate synthase] + 2 Fe(3+) + 4 H2O = L-lysyl-[4-amino-5-hydroxymethyl-2-methylpyrimidine phosphate synthase] + (2S)-2-amino-5-hydroxy-4-oxopentanoyl-[4-amino-5-hydroxymethyl-2-methylpyrimidine phosphate synthase] + 4-amino-2-methyl-5-(phosphooxymethyl)pyrimidine + 3-oxopropanoate + 2 Fe(2+) + 2 H(+). Its pathway is cofactor biosynthesis; thiamine diphosphate biosynthesis. Responsible for the formation of the pyrimidine heterocycle in the thiamine biosynthesis pathway. Catalyzes the formation of hydroxymethylpyrimidine phosphate (HMP-P) from histidine and pyridoxal phosphate (PLP). The protein uses PLP and the active site histidine to form HMP-P, generating an inactive enzyme. The enzyme can only undergo a single turnover, which suggests it is a suicide enzyme. This chain is 4-amino-5-hydroxymethyl-2-methylpyrimidine phosphate synthase THI11, found in Saccharomyces cerevisiae (strain ATCC 204508 / S288c) (Baker's yeast).